The primary structure comprises 368 residues: MLWHAMPPELNTARLMAGAGPAPMLAAAAGWQTLSAALDAQAVELTARLNSLGEAWTGGGSDKALAAATPMVVWLQTASTQAKTRAMQATAQAAAYTQAMATTPSLPEIAANHITQAVLTATNFFGINTIPIALTEMDYFIRMWNQAALAMEVYQAETAVNTLFEKLEPMASILDPGASQSTTNPIFGMPSPGSSTPVGQLPPAATQTLGQLGEMSGPMQQLTQPLQQVTSLFSQVGGTGGGNPADEEAAQMGLLGTSPLSNHPLAGGSGPSAGAGLLRAESLPGAGGSLTRTPLMSQLIEKPVAPSVMPAAAAGSSATGGAAPVGAGAMGQGAQSGGSTRPGLVAPAPLAQEREEDDEDDWDEEDDW.

Disordered stretches follow at residues 255–280 and 312–368; these read LGTSPLSNHPLAGGSGPSAGAGLLRA and AAAG…EDDW. Low complexity predominate over residues 312–327; sequence AAAGSSATGGAAPVGA. Residues 354 to 368 show a composition bias toward acidic residues; that stretch reads REEDDEDDWDEEDDW.

Belongs to the mycobacterial PPE family. As to quaternary structure, homodimer. Interacts with PE35. PE35/PPE68 complex interacts with human TLR2.

It localises to the secreted. Its subcellular location is the cell wall. It is found in the cell membrane. The protein localises to the cell surface. In terms of biological role, plays a major role in RD1-associated pathogenesis, and may contribute to the establishment and maintenance of M.tuberculosis infection. Together with PE35, stimulates the secretion of IL-10 and MCP-1 from human macrophages, via the interaction with human Toll-like receptor 2 (TLR2). In Mycobacterium tuberculosis (strain CDC 1551 / Oshkosh), this protein is PPE family immunomodulator PPE68 (PPE68).